The following is a 108-amino-acid chain: Nucleoid-associated protein Lcho_1975 (108 aa).

The protein belongs to the YbaB/EbfC family. Homodimer.

Its subcellular location is the cytoplasm. The protein resides in the nucleoid. Functionally, binds to DNA and alters its conformation. May be involved in regulation of gene expression, nucleoid organization and DNA protection. This is Nucleoid-associated protein Lcho_1975 from Leptothrix cholodnii (strain ATCC 51168 / LMG 8142 / SP-6) (Leptothrix discophora (strain SP-6)).